The sequence spans 506 residues: uncharacterized protein (506 aa).

The protein to group II intron maturases.

The protein localises to the plastid. It is found in the chloroplast. This is an uncharacterized protein from Euglena gracilis.